The sequence spans 697 residues: Semaphorin-2A (697 aa).

The N-terminal stretch at 1 to 20 (MAAKLWNLLLVAASVHLVGS) is a signal peptide. In terms of domain architecture, Sema spans 21 to 493 (VEQLHQDLIH…SDNIVRQIEL (473 aa)). Asn-63 and Asn-66 each carry an N-linked (GlcNAc...) asparagine glycan. Cys-87 and Cys-98 are joined by a disulfide. Residues Asn-132, Asn-198, and Asn-283 are each glycosylated (N-linked (GlcNAc...) asparagine). 2 disulfide bridges follow: Cys-260-Cys-367 and Cys-284-Cys-326. N-linked (GlcNAc...) asparagine glycosylation is present at Asn-369. Intrachain disulfides connect Cys-496–Cys-512 and Cys-506–Cys-521. Residues 526–634 (PGLLQDVTNT…LCSYNITVDA (109 aa)) form the Ig-like C2-type domain. 3 N-linked (GlcNAc...) asparagine glycosylation sites follow: Asn-534, Asn-629, and Asn-679. Cys-618 and Cys-654 are joined by a disulfide. Residues 673–685 (QCSTKQNNSNQKT) are compositionally biased toward polar residues. Positions 673 to 697 (QCSTKQNNSNQKTHPNDIFHSNPVA) are disordered.

The protein belongs to the semaphorin family. In terms of tissue distribution, expressed in a gradient in the developing limb bud epithelium during Ti pioneer axon outgrowth.

Its subcellular location is the secreted. In terms of biological role, acts as a chemorepulsive guidance molecule critical for axon fasciculation and for determining both the initial direction and subsequent pathfinding events of the Ti axon projection. This Schistocerca gregaria (Desert locust) protein is Semaphorin-2A (SEMA-2A).